Reading from the N-terminus, the 381-residue chain is Cytochrome b (381 aa).

Transmembrane regions (helical) follow at residues 34-54, 78-99, 114-134, and 179-199; these read FGSL…FLAM, WLIR…YLHI, WNIG…GYVL, and FFAF…IHLL. Positions 84 and 98 each coordinate heme b. Heme b is bound by residues histidine 183 and histidine 197. Histidine 202 contacts a ubiquinone. 4 helical membrane-spanning segments follow: residues 227 to 247, 289 to 309, 321 to 341, and 348 to 368; these read YKDL…ALFM, LGGV…PLLH, LTQI…WIGG, and FITV…IIMP.

This sequence belongs to the cytochrome b family. In terms of assembly, the cytochrome bc1 complex contains 3 respiratory subunits (MT-CYB, CYC1 and UQCRFS1), 2 core proteins (UQCRC1 and UQCRC2) and probably 6 low-molecular weight proteins. Heme b is required as a cofactor.

It localises to the mitochondrion inner membrane. Its function is as follows. Component of the ubiquinol-cytochrome c reductase complex (complex III or cytochrome b-c1 complex) that is part of the mitochondrial respiratory chain. The b-c1 complex mediates electron transfer from ubiquinol to cytochrome c. Contributes to the generation of a proton gradient across the mitochondrial membrane that is then used for ATP synthesis. The sequence is that of Cytochrome b (mt-cyb) from Sphyrna tiburo tiburo (Hammerhead shark).